The chain runs to 78 residues: Large ribosomal subunit protein bL28 (78 aa).

It belongs to the bacterial ribosomal protein bL28 family.

The polypeptide is Large ribosomal subunit protein bL28 (Klebsiella pneumoniae (strain 342)).